The chain runs to 595 residues: MEPRSRRRRSRQLVATFLRDPGSGRVYRRGKLIGKGAFSRCYKLTDMSTSAVFALKVVPRGGAGRLRLRGKVEREIALHSRLRHRNIVAFHAHFADRDHVYMVLEYCSRQSLAHVLKVRRTLTEPEVRYYLRGLVSGLRYLHQQRIVHRDLKPSNFFLNKNMEVKIGDLGLAARVGPAGRCHRVLCGTPNFQAPEVVSRNGHSCKSDIWALGCIMYTVLTGTPPFAAAPLSEMYQNIRDGHYLEPTHLSPSARSLIARLLAPDPAERPSLDHLLQDDFFSQGFTPERLPPHSCHSPPVFAFPPPLGRLFRKVGQLLLTQCRPPCPFTSKEASGPGEEGTEPDHMEAGNEERDPLCTEGRIHLLTLGTPRTGLAGPKGSLALQLEVATRKLFLCLDAGPMAGQDPPGEQRPVLWAPKWVDYSLKYGFGYQLSDGGSGVLFRDGSHMALRPQGGHVSYQPDQGTLWTFTLRDVPSPLRAKLAVLRLFACYMQRRLREEGTVPMPATPASPDISLLSFIADSQAMVMLFSNGTVQVSLKTSQTQLVLSGEDEDLLLTLQEPGGPAVGVSYTLDVLRSHGFTLAVHHHLRHGLHLLQSV.

The Protein kinase domain maps to 27 to 279 (YRRGKLIGKG…LDHLLQDDFF (253 aa)). ATP contacts are provided by residues 33–41 (IGKGAFSRC) and lysine 56. Aspartate 150 (proton acceptor) is an active-site residue. Residues 326 to 350 (FTSKEASGPGEEGTEPDHMEAGNEE) form a disordered region. Positions 340-350 (EPDHMEAGNEE) are enriched in basic and acidic residues. POLO box domains follow at residues 413–491 (WAPK…YMQR) and 509–595 (DISL…LQSV).

Belongs to the protein kinase superfamily. Ser/Thr protein kinase family. CDC5/Polo subfamily. As to expression, expressed in the cerebellum, eye and brain cortex (at protein level). Expressed in highly differentiated tissues, such as brain, eyes and ovary. Not detectable in proliferating tissues, such as the colon, spleen and placenta.

Its subcellular location is the nucleus. The protein resides in the nucleolus. It is found in the cytoplasm. Functionally, inactive serine/threonine-protein kinase that plays a role in cell cycle progression and neuronal differentiation. The protein is Inactive serine/threonine-protein kinase PLK5 of Mus musculus (Mouse).